We begin with the raw amino-acid sequence, 639 residues long: Signal recognition particle receptor subunit alpha (639 aa).

Residues 132–317 (APTTMKKFED…STKPSATKGT (186 aa)) are disordered. Composition is skewed to basic and acidic residues over residues 137–146 (KKFEDSEKAK) and 153–165 (IETR…EKAK). Ser-178 is subject to Phosphoserine. Over residues 204–240 (ELSKEEQIRRKREEFIQKHGRGMEKSSKSSKSDAPKE) the composition is skewed to basic and acidic residues. At Thr-285 the chain carries Phosphothreonine. Phosphoserine is present on residues Ser-297, Ser-298, and Ser-299. The span at 305–315 (AQNSTKPSATK) shows a compositional bias: polar residues. The NG domain stretch occupies residues 420-637 (YVVTFCGVNG…NAKAVVAALM (218 aa)). 426–433 (GVNGVGKS) provides a ligand contact to GTP. A Phosphoserine modification is found at Ser-474. 521–525 (DTAGR) serves as a coordination point for GTP. Thr-579 carries the phosphothreonine modification. 589–592 (TKFD) is a GTP binding site.

Belongs to the GTP-binding SRP family. In terms of assembly, heterodimer with SRPRB. Interacts with the signal recognition particle (SRP) complex subunit SRP54.

Its subcellular location is the endoplasmic reticulum membrane. Functionally, component of the SRP (signal recognition particle) receptor. Ensures, in conjunction with the signal recognition particle, the correct targeting of the nascent secretory proteins to the endoplasmic reticulum membrane system. Forms a guanosine 5'-triphosphate (GTP)-dependent complex with the SRP subunit SRP54. SRP receptor compaction and GTPase rearrangement drive SRP-mediated cotranslational protein translocation into the ER. In Bos taurus (Bovine), this protein is Signal recognition particle receptor subunit alpha.